Consider the following 259-residue polypeptide: Isoprenyl transferase (259 aa).

Residue D30 is part of the active site. D30 contributes to the Mg(2+) binding site. Residues 31–34 (GNGR), W35, R43, H47, and 75–77 (STE) each bind substrate. N78 functions as the Proton acceptor in the catalytic mechanism. Residues W79, R81, R198, and 204-206 (RIS) each bind substrate. E217 provides a ligand contact to Mg(2+).

Belongs to the UPP synthase family. Homodimer. The cofactor is Mg(2+).

In terms of biological role, catalyzes the condensation of isopentenyl diphosphate (IPP) with allylic pyrophosphates generating different type of terpenoids. In Caulobacter vibrioides (strain ATCC 19089 / CIP 103742 / CB 15) (Caulobacter crescentus), this protein is Isoprenyl transferase.